Here is a 68-residue protein sequence, read N- to C-terminus: Galectin-10 (68 aa).

Residues 1 to 68 (EPYLQVDFHT…LSISVLPDKY (68 aa)) enclose the Galectin domain.

Interacts with CEL.

The protein localises to the cytoplasm. Its subcellular location is the cytosol. It is found in the cytoplasmic granule. In terms of biological role, regulates immune responses through the recognition of cell-surface glycans. Essential for the anergy and suppressive function of CD25-positive regulatory T-cells (Treg). This chain is Galectin-10 (CLC), found in Pongo pygmaeus (Bornean orangutan).